The chain runs to 289 residues: Protoheme IX farnesyltransferase (289 aa).

The next 9 helical transmembrane spans lie at 9-29 (VALM…PVMM), 35-55 (MPSL…AGSA), 89-109 (LTFG…LVNW), 110-130 (PSAL…TLGL), 138-158 (IVIG…AVTG), 164-184 (AVLL…ALAM), 188-208 (DDYA…EVVT), 228-248 (VAHT…WFLA), and 269-289 (FHMS…TAVV).

It belongs to the UbiA prenyltransferase family. Protoheme IX farnesyltransferase subfamily.

It localises to the cell membrane. The catalysed reaction is heme b + (2E,6E)-farnesyl diphosphate + H2O = Fe(II)-heme o + diphosphate. It functions in the pathway porphyrin-containing compound metabolism; heme O biosynthesis; heme O from protoheme: step 1/1. Converts heme B (protoheme IX) to heme O by substitution of the vinyl group on carbon 2 of heme B porphyrin ring with a hydroxyethyl farnesyl side group. This chain is Protoheme IX farnesyltransferase, found in Frankia alni (strain DSM 45986 / CECT 9034 / ACN14a).